We begin with the raw amino-acid sequence, 1119 residues long: Multiple epidermal growth factor-like domains protein 10 (1119 aa).

The signal sequence occupies residues 1–22; the sequence is MMSSCGPLLLAVSCCLVALTSS. Topologically, residues 23–851 are extracellular; that stretch reads LNLDDPNVCS…ALPMDSYQIG (829 aa). Positions 27–104 constitute an EMI domain; that stretch reads DPNVCSHWES…FYESGDICVP (78 aa). 15 disulfide bridges follow: Cys-31–Cys-92, Cys-57–Cys-66, Cys-91–Cys-102, Cys-102–Cys-115, Cys-106–Cys-121, Cys-123–Cys-132, Cys-145–Cys-157, Cys-151–Cys-164, Cys-166–Cys-175, Cys-188–Cys-200, Cys-194–Cys-207, Cys-209–Cys-218, Cys-231–Cys-243, Cys-237–Cys-250, and Cys-252–Cys-260. EGF-like domains lie at 98–133, 141–176, 184–219, and 227–261; these read SGDICVPHCAEKCVHGRCVAPNTCQCEPGWGGADCS, WGPHCSSRCQCKNEALCNPITGACICAPGYHGWRCE, YGNNCQQKCLCQNNATCHHITGECVCSPGYTGAFCE, and HGQQCEERCPCQNGGVCHHVTGECSCPAGWGMVCG. N-linked (GlcNAc...) asparagine glycosylation is present at Asn-197. An N-linked (GlcNAc...) asparagine glycan is attached at Asn-272. 2 consecutive EGF-like domains span residues 274 to 304 and 312 to 347; these read SQECQCHNGGICSPSTGQCVCSSGYTGERCQ and YGIGCSQACRCVNGAQCYHVSGACLCEQGYTGESCE. Disulfide bonds link Cys-277–Cys-285, Cys-279–Cys-292, Cys-294–Cys-303, Cys-316–Cys-328, Cys-322–Cys-335, and Cys-337–Cys-346. N-linked (GlcNAc...) asparagine glycosylation is found at Asn-369 and Asn-393. EGF-like domains follow at residues 401-436, 444-479, 487-522, 573-608, 616-653, 666-696, 709-739, 747-782, and 795-825; these read YGEACQEVCRCQNGADCHSVSGECICAPGYKGSDCA, YGINCTSLCSCKNGAICSPIDGSCSCQAGWHGVDCS, WGLGCNLSCVCGNGGACNALDGKCTCTPGWRGDRCD, WGPNCSLSCNCKNSASCSPDEGACECAPGFRGTTCQ, FGHRCSQACPHCVHSNGPCHHVTGQCECLPGFKGALCN, GGSCTCTNNGTCSPMDGSCQCYPGWIGSDCS, IHTCNCHNGAFCSAYDGECKCTAGWTGLYCT, YGKDCVQACQCENGADCNHISGQCTCRTGFMGRHCE, and RQVCDCLNNSTCDHMTGTCYCNPGWKGTRCD. 3 cysteine pairs are disulfide-bonded: Cys-405/Cys-417, Cys-411/Cys-424, and Cys-426/Cys-435. A glycan (N-linked (GlcNAc...) asparagine) is linked at Asn-447. 6 disulfides stabilise this stretch: Cys-448–Cys-460, Cys-454–Cys-467, Cys-469–Cys-478, Cys-491–Cys-503, Cys-497–Cys-510, and Cys-512–Cys-521. N-linked (GlcNAc...) asparagine glycosylation occurs at Asn-492. N-linked (GlcNAc...) asparagine glycosylation occurs at Asn-576. 18 disulfide bridges follow: Cys-577-Cys-589, Cys-583-Cys-596, Cys-598-Cys-607, Cys-620-Cys-634, Cys-624-Cys-641, Cys-643-Cys-652, Cys-669-Cys-677, Cys-671-Cys-684, Cys-686-Cys-695, Cys-712-Cys-720, Cys-714-Cys-727, Cys-729-Cys-738, Cys-751-Cys-763, Cys-757-Cys-770, Cys-772-Cys-781, Cys-798-Cys-806, Cys-800-Cys-813, and Cys-815-Cys-824. A glycan (N-linked (GlcNAc...) asparagine) is linked at Asn-674. Asn-803 is a glycosylation site (N-linked (GlcNAc...) asparagine). Residues 852–872 form a helical membrane-spanning segment; the sequence is AITGIIILVLLVLILLLLFII. The Cytoplasmic portion of the chain corresponds to 873–1119; sequence YRKKQKGKES…SSPSPTEDSK (247 aa).

Belongs to the MEGF family.

It localises to the cell membrane. Membrane receptor involved in phagocytosis by macrophages and astrocytes of apoptotic cells. Essential factor in the regulation of muscle development including myogenesis. Likely plays a key role in muscle cell proliferation, adhesion and motility. May control the balance between skeletal muscle satellite cells proliferation and differentiation through regulation of the notch signaling pathway. In Danio rerio (Zebrafish), this protein is Multiple epidermal growth factor-like domains protein 10.